Here is a 261-residue protein sequence, read N- to C-terminus: Matrix metalloproteinase-26 (261 aa).

A signal peptide spans 1–17; the sequence is MQLVILRVTIFLPWCFA. Residues 18-89 constitute a propeptide that is removed on maturation; the sequence is VPVPPAADHK…PHCGVPDGSD (72 aa). Asn64 carries an N-linked (GlcNAc...) asparagine glycan. A Cysteine switch motif is present at residues 80-87; sequence PHCGVPDG. Zn(2+) is bound by residues Cys82 and His208. Glu209 is an active-site residue. Zn(2+)-binding residues include His212 and His218. Residue Asn221 is glycosylated (N-linked (GlcNAc...) asparagine).

Belongs to the peptidase M10A family. Requires Zn(2+) as cofactor. Ca(2+) is required as a cofactor. In terms of tissue distribution, expressed specifically in uterus and placenta. Is also widely expressed in malignant tumors from different sources as well as in diverse tumor cell lines.

It localises to the secreted. It is found in the extracellular space. The protein localises to the extracellular matrix. In terms of biological role, may hydrolyze collagen type IV, fibronectin, fibrinogen, beta-casein, type I gelatin and alpha-1 proteinase inhibitor. Is also able to activate progelatinase B. The polypeptide is Matrix metalloproteinase-26 (MMP26) (Homo sapiens (Human)).